The sequence spans 251 residues: Ribonuclease HII (251 aa).

The 192-residue stretch at 32 to 223 (GPVAGVDEAG…VRERLGLRPL (192 aa)) folds into the RNase H type-2 domain. A divalent metal cation is bound by residues Asp-38, Glu-39, and Asp-132.

It belongs to the RNase HII family. Mn(2+) is required as a cofactor. Mg(2+) serves as cofactor.

Its subcellular location is the cytoplasm. It catalyses the reaction Endonucleolytic cleavage to 5'-phosphomonoester.. Functionally, endonuclease that specifically degrades the RNA of RNA-DNA hybrids. This Nocardia farcinica (strain IFM 10152) protein is Ribonuclease HII.